Here is a 1699-residue protein sequence, read N- to C-terminus: Eukaryotic translation initiation factor 2-alpha kinase gcn-2 (1699 aa).

The RWD domain occupies 22 to 138 (EEKLALDAVY…HRVREFLTDH (117 aa)). 2 Protein kinase domains span residues 108–507 (LTIL…DVVL) and 508–999 (VRNK…DEDL). Residues 114–122 (MADTWEGCV), Lys-154, 497–505 (LGRGGFGDV), and Lys-520 each bind ATP. 2 disordered regions span residues 572-615 (DSSL…SLMP) and 632-725 (KEWS…SVFE). Residues 669 to 706 (SSDDEDDDDSSEIDWDAESEEVEDEESDDSDEEDEDDG) are compositionally biased toward acidic residues. Polar residues predominate over residues 711-720 (QLNTETSTGA). Residue Asp-829 is the Proton acceptor of the active site.

This sequence belongs to the protein kinase superfamily. Ser/Thr protein kinase family. GCN2 subfamily.

It catalyses the reaction L-seryl-[protein] + ATP = O-phospho-L-seryl-[protein] + ADP + H(+). It carries out the reaction L-threonyl-[protein] + ATP = O-phospho-L-threonyl-[protein] + ADP + H(+). Its function is as follows. Serine/threonine-protein kinase which phosphorylates the alpha subunit of eukaryotic translation-initiation factor 2 (eIF2alpha), leading to its inactivation and thus to a rapid reduction of translational initiation and repression of global protein synthesis. Involved in the unfolded protein response (UPR) triggered by several stresses including mitochondrial, osmotic and oxidative stresses, amino acid deprivation and UV irradiation, probably by phosphorylating and inhibiting eIF2alpha. In addition, leads to the selective translation/transcription of some mRNA including atf-5, pha-4 and gpdh-1 which are part of the UPR. Required for maintaining lifespan during amino acid starvation. Involved in hypoxia-mediated adaptive protective response. This Caenorhabditis elegans protein is Eukaryotic translation initiation factor 2-alpha kinase gcn-2.